The chain runs to 925 residues: Proto-oncogene DBL (925 aa).

Residues 1-88 (MAEANPRRGK…ELGGTLQYCH (88 aa)) enclose the CRAL-TRIO domain. Residues 221 to 322 (WKFEQDFQQL…EIKAKRIQLS (102 aa)) form a Spectrin repeat. The DH domain occupies 495 to 675 (LKNHVLNELI…LDLLKSVNDS (181 aa)). One can recognise a PH domain in the interval 687 to 809 (NLNELGKMIM…WLKEIRNILL (123 aa)).

The protein belongs to the MCF2 family. Interacts with an array of inositol phospholipids such as phosphatidylinositol 3-phosphate (PI3P), phosphatidylinositol 4-phosphate (PI4P) and phosphatidylinositol 5-phosphate (PI5P). May interact with CCPG1. Phosphorylation by TNK2 enhances guanine nucleotide exchange factor (GEF) activity toward Rho family proteins. As to expression, isoform 1 is expressed only in brain. Isoform 3 is expressed in heart, kidney, spleen, liver and testis. Isoform 4 is expressed in brain, heart, kidney, testis, placenta, stomach and peripheral blood. The protein is detectable in brain, heart, kidney, intestine, muscle, lung and testis.

It is found in the cytoplasm. It localises to the membrane. Functionally, guanine nucleotide exchange factor (GEF) that modulates the Rho family of GTPases. Promotes the conversion of some member of the Rho family GTPase from the GDP-bound to the GTP-bound form. Isoform 1 exhibits no activity toward RHOA, RAC1 or CDC42. Isoform 2 exhibits decreased GEF activity toward CDC42. Isoform 3 exhibits a weak but significant activity toward RAC1 and CDC42. Isoform 4 exhibits significant activity toward RHOA and CDC42. The truncated DBL oncogene is active toward RHOA, RAC1 and CDC42. This chain is Proto-oncogene DBL (MCF2), found in Homo sapiens (Human).